Here is a 162-residue protein sequence, read N- to C-terminus: Phosphopantetheine adenylyltransferase (162 aa).

S11 contributes to the substrate binding site. ATP contacts are provided by residues 11-12 and H19; that span reads SF. Substrate is bound by residues K43, V76, and R90. Residues 91-93, E101, and 126-132 contribute to the ATP site; these read GLR and HLYISSS.

Belongs to the bacterial CoaD family. In terms of assembly, homohexamer. Mg(2+) is required as a cofactor.

The protein localises to the cytoplasm. The catalysed reaction is (R)-4'-phosphopantetheine + ATP + H(+) = 3'-dephospho-CoA + diphosphate. It functions in the pathway cofactor biosynthesis; coenzyme A biosynthesis; CoA from (R)-pantothenate: step 4/5. Its function is as follows. Reversibly transfers an adenylyl group from ATP to 4'-phosphopantetheine, yielding dephospho-CoA (dPCoA) and pyrophosphate. In Streptococcus pneumoniae (strain Hungary19A-6), this protein is Phosphopantetheine adenylyltransferase.